The chain runs to 293 residues: AA9 family lytic polysaccharide monooxygenase E (293 aa).

Residues 1–19 (MKGLLSVAALSLAVSEVSA) form the signal peptide. Cu(2+)-binding residues include histidine 20 and histidine 90. An intrachain disulfide couples cysteine 59 to cysteine 172. Histidine 158 and glutamine 167 together coordinate O2. Tyrosine 169 lines the Cu(2+) pocket. A CBM1 domain is found at 257 to 293 (CAVAKWGQCGGNGWTGCTTCAAGSTCNTQNAYYHQCV).

It belongs to the polysaccharide monooxygenase AA9 family. The cofactor is Cu(2+).

The protein resides in the secreted. It carries out the reaction [(1-&gt;4)-beta-D-glucosyl]n+m + reduced acceptor + O2 = 4-dehydro-beta-D-glucosyl-[(1-&gt;4)-beta-D-glucosyl]n-1 + [(1-&gt;4)-beta-D-glucosyl]m + acceptor + H2O.. Its activity is regulated as follows. Glucose dehydrogenase and aryl-alcohol quinone oxidoreductases regulate the oxidative degradation of cellulose since they can act as catalytically efficient electron donors for LPMO9E. In terms of biological role, lytic polysaccharide monooxygenase (LPMO) that depolymerizes crystalline and amorphous polysaccharides via the oxidation of scissile alpha- or beta-(1-4)-glycosidic bonds, yielding only C1 oxidation products. Catalysis by LPMOs requires the reduction of the active-site copper from Cu(II) to Cu(I) by a reducing agent and H(2)O(2) or O(2) as a cosubstrate. Improves the progression of lytic enzymes in delignified miscanthus cell walls. This boosting effect dependents on the cellular type which indicates contrasted recalcitrance levels in plant tissues. This Podospora anserina (strain S / ATCC MYA-4624 / DSM 980 / FGSC 10383) (Pleurage anserina) protein is AA9 family lytic polysaccharide monooxygenase E.